The sequence spans 951 residues: Coiled-coil domain-containing protein 15 (951 aa).

4 coiled-coil regions span residues 64–89, 154–193, 782–813, and 839–874; these read LIEEELKEQLRKKQEALKHFQKQVKY, DGIEDEENQNELFQQQAQALSETMKQARHRLASFKTVIKK, MDIEREQVKEQQRQKEQKKKIEKIKKKREQEC, and LAQLQLQEIKGTREKQQREKEYLRYVEALRAQIQEK.

As to quaternary structure, interacts with POC5, POC1B, CETN2 and FAM161A.

The protein localises to the cytoplasm. The protein resides in the cytoskeleton. It is found in the microtubule organizing center. It localises to the centrosome. Its subcellular location is the centriole. The protein localises to the centriolar satellite. Plays an important role in primary cilium assembly, maintenance, and length regulation. Interacts with centriole inner scaffold proteins to promote proper centriole size and integrity and assembly of functional cilia. Required for the recruitment of both the inner scaffold protein POC1B and the distal SFI1/CETN2 complex to centrioles. This is Coiled-coil domain-containing protein 15 (CCDC15) from Homo sapiens (Human).